Consider the following 293-residue polypeptide: 4-hydroxy-tetrahydrodipicolinate synthase (293 aa).

Position 47 (Thr-47) interacts with pyruvate. The Proton donor/acceptor role is filled by Tyr-136. Catalysis depends on Lys-164, which acts as the Schiff-base intermediate with substrate. Ile-206 lines the pyruvate pocket.

This sequence belongs to the DapA family. In terms of assembly, homotetramer; dimer of dimers.

The protein localises to the cytoplasm. It catalyses the reaction L-aspartate 4-semialdehyde + pyruvate = (2S,4S)-4-hydroxy-2,3,4,5-tetrahydrodipicolinate + H2O + H(+). It participates in amino-acid biosynthesis; L-lysine biosynthesis via DAP pathway; (S)-tetrahydrodipicolinate from L-aspartate: step 3/4. Catalyzes the condensation of (S)-aspartate-beta-semialdehyde [(S)-ASA] and pyruvate to 4-hydroxy-tetrahydrodipicolinate (HTPA). This is 4-hydroxy-tetrahydrodipicolinate synthase from Listeria welshimeri serovar 6b (strain ATCC 35897 / DSM 20650 / CCUG 15529 / CIP 8149 / NCTC 11857 / SLCC 5334 / V8).